The chain runs to 161 residues: Small ribosomal subunit protein uS9 (161 aa).

The protein belongs to the universal ribosomal protein uS9 family.

This chain is Small ribosomal subunit protein uS9, found in Bartonella bacilliformis (strain ATCC 35685 / KC583 / Herrer 020/F12,63).